A 968-amino-acid polypeptide reads, in one-letter code: RNA polymerase-associated protein RapA (968 aa).

A Helicase ATP-binding domain is found at D164–N334. ATP is bound at residue D177–T184. The DEAH box signature appears at D280–H283. The region spanning R490–G662 is the Helicase C-terminal domain.

Belongs to the SNF2/RAD54 helicase family. RapA subfamily. As to quaternary structure, interacts with the RNAP. Has a higher affinity for the core RNAP than for the holoenzyme. Its ATPase activity is stimulated by binding to RNAP.

In terms of biological role, transcription regulator that activates transcription by stimulating RNA polymerase (RNAP) recycling in case of stress conditions such as supercoiled DNA or high salt concentrations. Probably acts by releasing the RNAP, when it is trapped or immobilized on tightly supercoiled DNA. Does not activate transcription on linear DNA. Probably not involved in DNA repair. This Escherichia coli O81 (strain ED1a) protein is RNA polymerase-associated protein RapA.